A 792-amino-acid chain; its full sequence is Alpha-1,6-mannosylglycoprotein 6-beta-N-acetylglucosaminyltransferase B (792 aa).

Residues 1–24 are Cytoplasmic-facing; it reads MITVNPDGKIMVRRCLVTLRPFRL. The helical; Signal-anchor for type II membrane protein transmembrane segment at 25–45 threads the bilayer; sequence FVLGIGFFTLCFLMTSLGGQF. Residues 46–792 lie on the Lumenal side of the membrane; the sequence is SARRLGDSPF…GQVALCQGCL (747 aa). N-linked (GlcNAc...) asparagine glycosylation is present at N127. 9 cysteine pairs are disulfide-bonded: C157/C195, C168/C208, C184/C353, C387/C644, C700/C775, C704/C777, C711/C764, C732/C753, and C788/C791.

This sequence belongs to the glycosyltransferase 18 family. The cofactor is Mn(2+). Predominantly expressed in brain. Expressed in all areas of the adult and fetal brain. Also expressed at much lower levels in testis, spleen and thymus.

The protein resides in the golgi apparatus membrane. It carries out the reaction N(4)-{beta-D-GlcNAc-(1-&gt;2)-[beta-D-GlcNAc-(1-&gt;4)]-alpha-D-Man-(1-&gt;3)-[beta-D-GlcNAc-(1-&gt;2)-alpha-D-Man-(1-&gt;6)]-beta-D-Man-(1-&gt;4)-beta-D-GlcNAc-(1-&gt;4)-beta-D-GlcNAc}-L-asparaginyl-[protein] + UDP-N-acetyl-alpha-D-glucosamine = N(4)-{beta-D-GlcNAc-(1-&gt;2)-[beta-D-GlcNAc-(1-&gt;4)]-alpha-D-Man-(1-&gt;3)-[beta-D-GlcNAc-(1-&gt;2)-[beta-D-GlcNAc-(1-&gt;6)]-alpha-D-Man-(1-&gt;6)]-beta-D-Man-(1-&gt;4)-beta-D-GlcNAc-(1-&gt;4)-beta-D-GlcNAc}-L-asparaginyl-[protein] + UDP + H(+). The catalysed reaction is 3-O-[N-acetyl-beta-D-glucosaminyl-(1-&gt;2)-alpha-D-mannosyl]-L-seryl-[protein] + UDP-N-acetyl-alpha-D-glucosamine = O(3)-{N-acetyl-beta-D-glucosaminyl-(1-&gt;2)-[N-acetyl-beta-D-glucosaminyl-(1-&gt;6)]-alpha-D-mannosyl}-L-seryl-[protein] + UDP + H(+). It catalyses the reaction 3-O-[N-acetyl-beta-D-glucosaminyl-(1-&gt;2)-alpha-D-mannosyl]-L-threonyl-[protein] + UDP-N-acetyl-alpha-D-glucosamine = O(3)-{N-acetyl-beta-D-glucosaminyl-(1-&gt;2)-[N-acetyl-beta-D-glucosaminyl-(1-&gt;6)]-alpha-D-mannosyl}-L-threonyl-[protein] + UDP + H(+). It functions in the pathway protein modification; protein glycosylation. In terms of biological role, glycosyltransferase that acts on alpha-linked mannose of N-glycans and O-mannosyl glycans. Catalyzes the transfer of N-acetylglucosamine (GlcNAc) to the beta 1-6 linkage of the mannose residue of GlcNAc-beta1,2-Man-alpha on both the alpha1,3- and alpha1,6-linked mannose arms in the core structure of N-glycan. Also acts on the GlcNAc-beta1,2-Man-alpha1-Ser/Thr moiety, forming a 2,6-branched structure in brain O-mannosyl glycan. Plays an active role in modulating integrin and laminin-dependent adhesion and migration of neuronal cells via its activity in the O-mannosyl glycan pathway. The polypeptide is Alpha-1,6-mannosylglycoprotein 6-beta-N-acetylglucosaminyltransferase B (MGAT5B) (Homo sapiens (Human)).